The sequence spans 386 residues: Probable protein phosphatase 2C 36 (386 aa).

The 304-residue stretch at 60-363 (ELSVAVVQGN…DDITVIVLFI (304 aa)) folds into the PPM-type phosphatase domain. The Mn(2+) site is built by Asp-94, Gly-95, Asp-295, and Asp-354.

Belongs to the PP2C family. Mg(2+) is required as a cofactor. Mn(2+) serves as cofactor.

The catalysed reaction is O-phospho-L-seryl-[protein] + H2O = L-seryl-[protein] + phosphate. It carries out the reaction O-phospho-L-threonyl-[protein] + H2O = L-threonyl-[protein] + phosphate. The chain is Probable protein phosphatase 2C 36 from Oryza sativa subsp. japonica (Rice).